The following is a 603-amino-acid chain: Elongation factor 4 (603 aa).

Positions 7-191 (DNIRNFSIVA…AIVTRLPPPK (185 aa)) constitute a tr-type G domain. GTP-binding positions include 19 to 24 (DHGKST) and 138 to 141 (NKVD).

This sequence belongs to the TRAFAC class translation factor GTPase superfamily. Classic translation factor GTPase family. LepA subfamily.

It localises to the cell inner membrane. The catalysed reaction is GTP + H2O = GDP + phosphate + H(+). Required for accurate and efficient protein synthesis under certain stress conditions. May act as a fidelity factor of the translation reaction, by catalyzing a one-codon backward translocation of tRNAs on improperly translocated ribosomes. Back-translocation proceeds from a post-translocation (POST) complex to a pre-translocation (PRE) complex, thus giving elongation factor G a second chance to translocate the tRNAs correctly. Binds to ribosomes in a GTP-dependent manner. The protein is Elongation factor 4 of Rhodopseudomonas palustris (strain ATCC BAA-98 / CGA009).